The sequence spans 134 residues: Retinol-binding protein 2 (134 aa).

All-trans-retinol-binding residues include K41 and Q109.

It belongs to the calycin superfamily. Fatty-acid binding protein (FABP) family. In terms of tissue distribution, expressed in prenatal liver, intestine and lung, and in adult intestine.

It is found in the cytoplasm. Its function is as follows. Intracellular transport of retinol. This chain is Retinol-binding protein 2 (Rbp2), found in Mus musculus (Mouse).